The sequence spans 217 residues: Octanoyltransferase (217 aa).

Residues 32–207 (DDSADEIWLV…HMIKKLNATQ (176 aa)) form the BPL/LPL catalytic domain. Substrate-binding positions include 71–78 (RGGQVTYH), 138–140 (SLG), and 151–153 (GLA). Cysteine 169 serves as the catalytic Acyl-thioester intermediate.

This sequence belongs to the LipB family.

The protein resides in the cytoplasm. It catalyses the reaction octanoyl-[ACP] + L-lysyl-[protein] = N(6)-octanoyl-L-lysyl-[protein] + holo-[ACP] + H(+). It functions in the pathway protein modification; protein lipoylation via endogenous pathway; protein N(6)-(lipoyl)lysine from octanoyl-[acyl-carrier-protein]: step 1/2. Its function is as follows. Catalyzes the transfer of endogenously produced octanoic acid from octanoyl-acyl-carrier-protein onto the lipoyl domains of lipoate-dependent enzymes. Lipoyl-ACP can also act as a substrate although octanoyl-ACP is likely to be the physiological substrate. This is Octanoyltransferase from Pseudoalteromonas translucida (strain TAC 125).